The chain runs to 161 residues: E3 ubiquitin ligase complex SCF subunit sconC (161 aa).

The tract at residues 102-161 (ILAANYLDIKPLLDIGCKTVANMIKGKSPEEIRKTFNIQNDFTPEEEDQIRRENEWAEDR) is interaction with the F-box domain of F-box proteins.

It belongs to the SKP1 family. In terms of assembly, component of the SCF (SKP1-CUL1-F-box protein) E3 ubiquitin ligase complexes.

The protein operates within protein modification; protein ubiquitination. Essential component of the SCF (SKP1-CUL1-F-box protein) E3 ubiquitin ligase complexes, which mediate the ubiquitination and subsequent proteasomal degradation of target proteins. Controls sulfur metabolite repression, probably by mediating the inactivation or degradation of the metR transcription factor. This Emericella nidulans (strain FGSC A4 / ATCC 38163 / CBS 112.46 / NRRL 194 / M139) (Aspergillus nidulans) protein is E3 ubiquitin ligase complex SCF subunit sconC (sconC).